Here is a 264-residue protein sequence, read N- to C-terminus: Heavy metal-associated isoprenylated plant protein 17 (264 aa).

HMA domains lie at Val-32–Glu-95 and Ile-133–Gln-204. A coiled-coil region spans residues Ser-185–Glu-218. Cysteine methyl ester is present on Cys-261. A lipid anchor (S-farnesyl cysteine) is attached at Cys-261. Residues Ser-262–Ser-264 constitute a propeptide, removed in mature form.

The protein belongs to the HIPP family.

Probable heavy-metal-binding protein. The protein is Heavy metal-associated isoprenylated plant protein 17 of Arabidopsis thaliana (Mouse-ear cress).